We begin with the raw amino-acid sequence, 466 residues long: 3-isopropylmalate dehydratase large subunit (466 aa).

[4Fe-4S] cluster contacts are provided by cysteine 349, cysteine 410, and cysteine 413.

The protein belongs to the aconitase/IPM isomerase family. LeuC type 1 subfamily. In terms of assembly, heterodimer of LeuC and LeuD. Requires [4Fe-4S] cluster as cofactor.

The catalysed reaction is (2R,3S)-3-isopropylmalate = (2S)-2-isopropylmalate. The protein operates within amino-acid biosynthesis; L-leucine biosynthesis; L-leucine from 3-methyl-2-oxobutanoate: step 2/4. Its function is as follows. Catalyzes the isomerization between 2-isopropylmalate and 3-isopropylmalate, via the formation of 2-isopropylmaleate. This is 3-isopropylmalate dehydratase large subunit from Ruthia magnifica subsp. Calyptogena magnifica.